The sequence spans 445 residues: MNSPLSSKNLRIFSKSVACKCLVLVGIALFYRALLLSYSPRNALSNSLLFRDRHMSDSSSTGGIRTDKFLEVPQIVWGLNNQKIAFARACLTARMMNRTLLMPSLSASLFYKEVDKLRPIPFDKVFQFERFNSLCSGFVRLSRFSDVKNRAQVFDLEKGSGRRWTVERDLEHLKQSARNESIDEFEVIRLIGKNPFLWHDHWPVEDYAKVFECMVVVDEISREADKVVMKIREAGEAERAKLASKTEILGPVPFVAVHMRIEIDWMIHCKKLEQRKKISEICSSKREILDRVGNISGLKTPTVLYLAVADTLLEEKEEDSSVLSGWRDGLIPFEKKKLGVKEEIYGKYSYLIQSAIDYEVCLRADVFVGNSFSTFSSLIVLERTQKARRLGFMSSCKDGGNKWRSYAYNLAGESNGVPRRWMTNMTHSSLQAISYGSNSVSCSSG.

A helical; Signal-anchor for type II membrane protein membrane pass occupies residues 12–34; it reads IFSKSVACKCLVLVGIALFYRAL. N97 and N179 each carry an N-linked (GlcNAc...) asparagine glycan. 258–260 contributes to the substrate binding site; sequence HMR. Residue N294 is glycosylated (N-linked (GlcNAc...) asparagine). 374-375 contacts substrate; the sequence is TF. N-linked (GlcNAc...) asparagine glycosylation occurs at N424.

This sequence belongs to the glycosyltransferase GT106 family. In terms of tissue distribution, expressed in dry pollen grains and germinating pollen grains.

It is found in the golgi apparatus membrane. It participates in glycan metabolism. Functionally, probable protein O-fucosyltransferase required for correct pollen tube penetration through the stigma-style interface. May be involved in protein O-glycosylation events during pollen-pistil interactions. The polypeptide is O-fucosyltransferase 23 (Arabidopsis thaliana (Mouse-ear cress)).